The primary structure comprises 549 residues: Probable protein kinase UbiB (549 aa).

One can recognise a Protein kinase domain in the interval 123–501 (DFNETPLASA…QQQAHKSNYL (379 aa)). ATP-binding positions include 129 to 137 (LASASISQV) and K152. The Proton acceptor role is filled by D287. 2 helical membrane-spanning segments follow: residues 498–518 (SNYL…LFNQ) and 520–540 (ATLW…IIGW).

This sequence belongs to the ABC1 family. UbiB subfamily.

It localises to the cell inner membrane. It functions in the pathway cofactor biosynthesis; ubiquinone biosynthesis [regulation]. In terms of biological role, is probably a protein kinase regulator of UbiI activity which is involved in aerobic coenzyme Q (ubiquinone) biosynthesis. The protein is Probable protein kinase UbiB of Shewanella sp. (strain MR-7).